We begin with the raw amino-acid sequence, 295 residues long: Bifunctional protein FolD (295 aa).

Residues 166-168 (GRS), serine 191, and isoleucine 232 each bind NADP(+).

Belongs to the tetrahydrofolate dehydrogenase/cyclohydrolase family. Homodimer.

The enzyme catalyses (6R)-5,10-methylene-5,6,7,8-tetrahydrofolate + NADP(+) = (6R)-5,10-methenyltetrahydrofolate + NADPH. The catalysed reaction is (6R)-5,10-methenyltetrahydrofolate + H2O = (6R)-10-formyltetrahydrofolate + H(+). Its pathway is one-carbon metabolism; tetrahydrofolate interconversion. Catalyzes the oxidation of 5,10-methylenetetrahydrofolate to 5,10-methenyltetrahydrofolate and then the hydrolysis of 5,10-methenyltetrahydrofolate to 10-formyltetrahydrofolate. This chain is Bifunctional protein FolD, found in Wolbachia sp. subsp. Brugia malayi (strain TRS).